The sequence spans 412 residues: Serine hydroxymethyltransferase (412 aa).

(6S)-5,6,7,8-tetrahydrofolate contacts are provided by residues L117 and G121–L123. Residue K226 is modified to N6-(pyridoxal phosphate)lysine. S349–F351 lines the (6S)-5,6,7,8-tetrahydrofolate pocket.

Belongs to the SHMT family. Homodimer. Requires pyridoxal 5'-phosphate as cofactor.

The protein resides in the cytoplasm. The catalysed reaction is (6R)-5,10-methylene-5,6,7,8-tetrahydrofolate + glycine + H2O = (6S)-5,6,7,8-tetrahydrofolate + L-serine. It participates in one-carbon metabolism; tetrahydrofolate interconversion. Its pathway is amino-acid biosynthesis; glycine biosynthesis; glycine from L-serine: step 1/1. Catalyzes the reversible interconversion of serine and glycine with tetrahydrofolate (THF) serving as the one-carbon carrier. This reaction serves as the major source of one-carbon groups required for the biosynthesis of purines, thymidylate, methionine, and other important biomolecules. Also exhibits THF-independent aldolase activity toward beta-hydroxyamino acids, producing glycine and aldehydes, via a retro-aldol mechanism. The protein is Serine hydroxymethyltransferase of Lawsonia intracellularis (strain PHE/MN1-00).